The following is a 374-amino-acid chain: Chaperone protein DnaJ (374 aa).

The J domain occupies 4 to 68 (DYYDILGVSR…QMRGRYDQFG (65 aa)). The segment at 133 to 215 (GGEQQIRISH…CGGRGQNQVS (83 aa)) adopts a CR-type zinc-finger fold. Zn(2+)-binding residues include Cys-146, Cys-149, Cys-163, Cys-166, Cys-189, Cys-192, Cys-203, and Cys-206. CXXCXGXG motif repeat units follow at residues 146–153 (CKTCEGTG), 163–170 (CSTCQGSG), 189–196 (CPTCNGQG), and 203–210 (CDSCGGRG).

This sequence belongs to the DnaJ family. In terms of assembly, homodimer. Requires Zn(2+) as cofactor.

Its subcellular location is the cytoplasm. Its function is as follows. Participates actively in the response to hyperosmotic and heat shock by preventing the aggregation of stress-denatured proteins and by disaggregating proteins, also in an autonomous, DnaK-independent fashion. Unfolded proteins bind initially to DnaJ; upon interaction with the DnaJ-bound protein, DnaK hydrolyzes its bound ATP, resulting in the formation of a stable complex. GrpE releases ADP from DnaK; ATP binding to DnaK triggers the release of the substrate protein, thus completing the reaction cycle. Several rounds of ATP-dependent interactions between DnaJ, DnaK and GrpE are required for fully efficient folding. Also involved, together with DnaK and GrpE, in the DNA replication of plasmids through activation of initiation proteins. In Acaryochloris marina (strain MBIC 11017), this protein is Chaperone protein DnaJ.